The chain runs to 356 residues: Heat-inducible transcription repressor HrcA (356 aa).

Belongs to the HrcA family.

Functionally, negative regulator of class I heat shock genes (grpE-dnaK-dnaJ and groELS operons). Prevents heat-shock induction of these operons. The sequence is that of Heat-inducible transcription repressor HrcA from Gluconobacter oxydans (strain 621H) (Gluconobacter suboxydans).